Reading from the N-terminus, the 142-residue chain is Hemoglobin subunit alpha-2 (142 aa).

In terms of domain architecture, Globin spans 2-142 (LLSADDKKHI…VSTVLTSKYR (141 aa)). His-59 provides a ligand contact to O2. His-88 is a binding site for heme b.

This sequence belongs to the globin family. Heterotetramer of two alpha chains and two beta chains. As to expression, red blood cells.

Functionally, involved in oxygen transport from the lung to the various peripheral tissues. The protein is Hemoglobin subunit alpha-2 (hba2) of Xenopus laevis (African clawed frog).